A 635-amino-acid chain; its full sequence is Threonine--tRNA ligase (635 aa).

Residues 1–62 (MITITLPDGS…EHDAILRIIT (62 aa)) enclose the TGS domain. Positions 244 to 535 (DHRKIGKAQD…LIEHYAGIWP (292 aa)) are catalytic. Residues Cys-335, His-386, and His-512 each contribute to the Zn(2+) site.

The protein belongs to the class-II aminoacyl-tRNA synthetase family. Homodimer. Zn(2+) serves as cofactor.

It is found in the cytoplasm. It catalyses the reaction tRNA(Thr) + L-threonine + ATP = L-threonyl-tRNA(Thr) + AMP + diphosphate + H(+). Its function is as follows. Catalyzes the attachment of threonine to tRNA(Thr) in a two-step reaction: L-threonine is first activated by ATP to form Thr-AMP and then transferred to the acceptor end of tRNA(Thr). Also edits incorrectly charged L-seryl-tRNA(Thr). This Xylella fastidiosa (strain M12) protein is Threonine--tRNA ligase.